A 238-amino-acid polypeptide reads, in one-letter code: Ribonuclease HII (238 aa).

Residues 12–197 (GIVAGVDEAG…VLELLTDDLL (186 aa)) enclose the RNase H type-2 domain. A divalent metal cation is bound by residues aspartate 18, glutamate 19, and aspartate 107.

The protein belongs to the RNase HII family. It depends on Mn(2+) as a cofactor. Requires Mg(2+) as cofactor.

It is found in the cytoplasm. The catalysed reaction is Endonucleolytic cleavage to 5'-phosphomonoester.. In terms of biological role, endonuclease that specifically degrades the RNA of RNA-DNA hybrids. This Thermotoga maritima (strain ATCC 43589 / DSM 3109 / JCM 10099 / NBRC 100826 / MSB8) protein is Ribonuclease HII (rnhB).